Reading from the N-terminus, the 484-residue chain is 1,4-beta-D-glucan cellobiohydrolase CEL6A (484 aa).

Residues 1–17 (MAKRLLLTAALAATTLA) form the signal peptide. One can recognise a CBM1 domain in the interval 26 to 62 (NCGSVWSQCGGQGWTGATCCASGSTCVAQNQWYSQCL). 2 cysteine pairs are disulfide-bonded: Cys-34–Cys-51 and Cys-45–Cys-61. Residues 68–98 (TTTAQAPSSTRTTTSSSSRPTSSSISTSAVN) form a disordered region. The substrate site is built by Trp-171 and Asp-173. N-linked (GlcNAc...) asparagine glycosylation occurs at Asn-175. A substrate binding loop 1 region spans residues 208–230 (YDLPDRDCAAAASNGEWAIADGG). Asp-260 functions as the Proton donor in the catalytic mechanism. Substrate contacts are provided by His-305, Trp-308, Asn-344, Trp-405, Lys-433, and Glu-437. Residues 431-469 (WIKPGGECDGTSDTTAARYDHHCGFADALKPAPEAGQWF) form a substrate binding loop 2 region. Asp-439 (proton acceptor) is an active-site residue.

It belongs to the glycosyl hydrolase 6 (cellulase B) family. In terms of assembly, monomer. In terms of processing, both N- and O-glycosylated.

Its subcellular location is the secreted. The enzyme catalyses Hydrolysis of (1-&gt;4)-beta-D-glucosidic linkages in cellulose and cellotetraose, releasing cellobiose from the non-reducing ends of the chains.. Its function is as follows. Exoglucanase that plays an important function in biomass degradation by catalyzing the hydrolysis of the non-reducing end beta-1,4-glucosidic linkages in cellulose and cellotetraose to release cellobiose. Hydrolyzes crystalline and amorphous cellulose but is inactive on hydroxyethyl cellulose, mannan, galactomannan, xyloglucan, arabinoxylan, arabinan, xylan, and pectin. The polypeptide is 1,4-beta-D-glucan cellobiohydrolase CEL6A (Podospora anserina (strain S / ATCC MYA-4624 / DSM 980 / FGSC 10383) (Pleurage anserina)).